The sequence spans 413 residues: Serine hydroxymethyltransferase (413 aa).

Residues leucine 117 and 121–123 each bind (6S)-5,6,7,8-tetrahydrofolate; that span reads GHL. Lysine 226 is modified (N6-(pyridoxal phosphate)lysine). 349–351 is a (6S)-5,6,7,8-tetrahydrofolate binding site; that stretch reads SPF.

It belongs to the SHMT family. Homodimer. Requires pyridoxal 5'-phosphate as cofactor.

The protein localises to the cytoplasm. It carries out the reaction (6R)-5,10-methylene-5,6,7,8-tetrahydrofolate + glycine + H2O = (6S)-5,6,7,8-tetrahydrofolate + L-serine. It participates in one-carbon metabolism; tetrahydrofolate interconversion. The protein operates within amino-acid biosynthesis; glycine biosynthesis; glycine from L-serine: step 1/1. Its function is as follows. Catalyzes the reversible interconversion of serine and glycine with tetrahydrofolate (THF) serving as the one-carbon carrier. This reaction serves as the major source of one-carbon groups required for the biosynthesis of purines, thymidylate, methionine, and other important biomolecules. Also exhibits THF-independent aldolase activity toward beta-hydroxyamino acids, producing glycine and aldehydes, via a retro-aldol mechanism. The protein is Serine hydroxymethyltransferase of Pelobacter propionicus (strain DSM 2379 / NBRC 103807 / OttBd1).